The following is a 212-amino-acid chain: Glycerol-3-phosphate acyltransferase (212 aa).

Helical transmembrane passes span 6 to 26 (IAVL…GLIL), 56 to 76 (LAAL…LLAH), 92 to 112 (LTLI…WLGF), 122 to 142 (LGVS…AWLL), 150 to 170 (SSVG…FMPA), and 171 to 191 (SHEI…LLLW).

It belongs to the PlsY family. As to quaternary structure, probably interacts with PlsX.

The protein localises to the cell inner membrane. It catalyses the reaction an acyl phosphate + sn-glycerol 3-phosphate = a 1-acyl-sn-glycero-3-phosphate + phosphate. Its pathway is lipid metabolism; phospholipid metabolism. Catalyzes the transfer of an acyl group from acyl-phosphate (acyl-PO(4)) to glycerol-3-phosphate (G3P) to form lysophosphatidic acid (LPA). This enzyme utilizes acyl-phosphate as fatty acyl donor, but not acyl-CoA or acyl-ACP. This Zymomonas mobilis subsp. mobilis (strain ATCC 31821 / ZM4 / CP4) protein is Glycerol-3-phosphate acyltransferase.